The following is a 264-amino-acid chain: S-adenosylmethionine decarboxylase proenzyme (264 aa).

Serine 112 serves as the catalytic Schiff-base intermediate with substrate; via pyruvic acid. Pyruvic acid (Ser); by autocatalysis is present on serine 112. The active-site Proton acceptor; for processing activity is the histidine 117. The Proton donor; for catalytic activity role is filled by cysteine 140.

The protein belongs to the prokaryotic AdoMetDC family. Type 2 subfamily. As to quaternary structure, heterooctamer of four alpha and four beta chains arranged as a tetramer of alpha/beta heterodimers. Pyruvate is required as a cofactor. Post-translationally, is synthesized initially as an inactive proenzyme. Formation of the active enzyme involves a self-maturation process in which the active site pyruvoyl group is generated from an internal serine residue via an autocatalytic post-translational modification. Two non-identical subunits are generated from the proenzyme in this reaction, and the pyruvate is formed at the N-terminus of the alpha chain, which is derived from the carboxyl end of the proenzyme. The post-translation cleavage follows an unusual pathway, termed non-hydrolytic serinolysis, in which the side chain hydroxyl group of the serine supplies its oxygen atom to form the C-terminus of the beta chain, while the remainder of the serine residue undergoes an oxidative deamination to produce ammonia and the pyruvoyl group blocking the N-terminus of the alpha chain.

The enzyme catalyses S-adenosyl-L-methionine + H(+) = S-adenosyl 3-(methylsulfanyl)propylamine + CO2. Its pathway is amine and polyamine biosynthesis; S-adenosylmethioninamine biosynthesis; S-adenosylmethioninamine from S-adenosyl-L-methionine: step 1/1. Catalyzes the decarboxylation of S-adenosylmethionine to S-adenosylmethioninamine (dcAdoMet), the propylamine donor required for the synthesis of the polyamines spermine and spermidine from the diamine putrescine. This Serratia proteamaculans (strain 568) protein is S-adenosylmethionine decarboxylase proenzyme.